A 97-amino-acid chain; its full sequence is Protein S100-A10 (97 aa).

N6-acetyllysine is present on residues Lys-23 and Lys-28. N6-acetyllysine; alternate is present on Lys-37. Residue Lys-37 forms a Glycyl lysine isopeptide (Lys-Gly) (interchain with G-Cter in SUMO2); alternate linkage. N6-acetyllysine is present on residues Lys-54 and Lys-57. The interval 60-71 is ancestral calcium site; it reads DQCRDGKVGFQS.

Belongs to the S-100 family. Heterotetramer containing 2 light chains of S100A10/p11 and 2 heavy chains of ANXA2/p36. Interacts with SCN10A. Interacts with TASOR.

Because S100A10 induces the dimerization of ANXA2/p36, it may function as a regulator of protein phosphorylation in that the ANXA2 monomer is the preferred target (in vitro) of tyrosine-specific kinase. This chain is Protein S100-A10 (S100A10), found in Bos taurus (Bovine).